A 1226-amino-acid polypeptide reads, in one-letter code: Polyamine-transporting ATPase 13A3 (1226 aa).

Residues 1–28 (MDKEERKIINQGQEDEMEIYGYNLSRWK) lie on the Cytoplasmic side of the membrane. The stretch at 29-49 (LAIVSLGVICTGGFLLLLLYW) is an intramembrane region. The Cytoplasmic segment spans residues 50 to 205 (MPEWRVKATC…IAVKVPSVFK (156 aa)). S98 bears the Phosphoserine mark. The helical transmembrane segment at 206–226 (LLIKEVLNPFYIFQLFSVILW) threads the bilayer. Residues 227-232 (STDEYY) lie on the Lumenal side of the membrane. The chain crosses the membrane as a helical span at residues 233-253 (YYALAIVVMSIVSIVSSLYSI). The Cytoplasmic portion of the chain corresponds to 254-409 (RKQYVMLHDM…KPTDFKLYRD (156 aa)). The helical transmembrane segment at 410-430 (AYLFLLCLVAVAGIGFIYTII) threads the bilayer. The Lumenal segment spans residues 431–448 (NSILNEVQVGVIIIESLD). A helical membrane pass occupies residues 449–469 (IITITVPPALPAAMTAGIVYA). The Cytoplasmic segment spans residues 470 to 940 (QRRLKKIGIF…ALITSFCVFK (471 aa)). D498 serves as the catalytic 4-aspartylphosphate intermediate. Mg(2+) contacts are provided by D498 and T500. Residues 498–500 (DKT), F628, R684, and D750 each bind ATP. At S817 the chain carries Phosphoserine. D883 is a Mg(2+) binding site. 883 to 887 (DGAND) lines the ATP pocket. Residues 941 to 961 (FMALYSIIQYFSVTLLYSILS) traverse the membrane as a helical segment. N962 is a topological domain (lumenal). The chain crosses the membrane as a helical span at residues 963–983 (LGDFQFLFIDLAIILVVVFTM). The Cytoplasmic segment spans residues 984–999 (SLNPAWKELVAQRPPS). Residues 1000-1020 (GLISGALLFSVLSQIIICIGF) form a helical membrane-spanning segment. At 1021–1073 (QSLGFFWVKQQPWYEVWHPKSDACNATGSLLWNSSHLDNETELDEHNIQNYEN) the chain is on the lumenal side. The chain crosses the membrane as a helical span at residues 1074-1094 (TTVFFISSFQYLIVAIAFSKG). Topologically, residues 1095–1105 (KPFRQPCYKNY) are cytoplasmic. A helical membrane pass occupies residues 1106-1126 (FFVFSVIFLYVFILFIMLYPV). Topologically, residues 1127–1143 (ASVDQVLQIVCVPYQWR) are lumenal. A helical transmembrane segment spans residues 1144 to 1164 (VTMLIIVLVNAFVSITVEESV). Over 1165 to 1226 (DRWRKCCLPW…NGSCQIITIT (62 aa)) the chain is Cytoplasmic.

Belongs to the cation transport ATPase (P-type) (TC 3.A.3) family. Type V subfamily.

It localises to the recycling endosome membrane. The protein resides in the early endosome membrane. The protein localises to the late endosome membrane. The catalysed reaction is putrescine(out) + ATP + H2O = putrescine(in) + ADP + phosphate + H(+). Its function is as follows. ATP-driven pump involved in endocytosis-dependent polyamine transport. Uses ATP as an energy source to transfer polyamine precursor putrescine from the endosomal compartment to the cytosol. This Macaca fascicularis (Crab-eating macaque) protein is Polyamine-transporting ATPase 13A3 (ATP13A3).